The chain runs to 188 residues: Protein TIFY 9 (188 aa).

Residues 20–41 (DADDRHAKSGGSSASSSSSIRG) are disordered. Residues 28–38 (SGGSSASSSSS) are compositionally biased toward low complexity. A Tify domain is found at 80–114 (AAAAAAPMTLFYNGSVAVFDVSHDKAEAIMRMATE). Residues 135 to 160 (PLTRTKSLQRFLSKRKERLTSLGPYQ) carry the Jas motif. Residues 156–188 (LGPYQVGGPAAVGATTSTTTKSFLAKEEEHTAS) form a disordered region. Positions 179-188 (LAKEEEHTAS) are enriched in basic and acidic residues.

It belongs to the TIFY/JAZ family. Ubiquitinated. Targeted for degradation by the SCF(COI1) E3 ubiquitin ligase-proteasome pathway during jasmonate signaling.

Repressor of jasmonate responses. The protein is Protein TIFY 9 of Oryza sativa subsp. indica (Rice).